The primary structure comprises 603 residues: Elongation factor 4 (603 aa).

Residues 7-189 (SHIRNFSIIA…SIVHLVPPPR (183 aa)) enclose the tr-type G domain. GTP-binding positions include 19–24 (DHGKST) and 136–139 (NKID).

This sequence belongs to the TRAFAC class translation factor GTPase superfamily. Classic translation factor GTPase family. LepA subfamily.

It is found in the cell inner membrane. The catalysed reaction is GTP + H2O = GDP + phosphate + H(+). Required for accurate and efficient protein synthesis under certain stress conditions. May act as a fidelity factor of the translation reaction, by catalyzing a one-codon backward translocation of tRNAs on improperly translocated ribosomes. Back-translocation proceeds from a post-translocation (POST) complex to a pre-translocation (PRE) complex, thus giving elongation factor G a second chance to translocate the tRNAs correctly. Binds to ribosomes in a GTP-dependent manner. In Thermosynechococcus vestitus (strain NIES-2133 / IAM M-273 / BP-1), this protein is Elongation factor 4.